The sequence spans 86 residues: UPF0335 protein mll3968 (86 aa).

The protein belongs to the UPF0335 family.

This is UPF0335 protein mll3968 from Mesorhizobium japonicum (strain LMG 29417 / CECT 9101 / MAFF 303099) (Mesorhizobium loti (strain MAFF 303099)).